A 646-amino-acid polypeptide reads, in one-letter code: A-kinase anchor protein 8-like (646 aa).

Residues 1–268 (MSYTGFVQGS…MRRTWKTWTT (268 aa)) form a sufficient for activation of CTE-mediated expression region. R208 carries the asymmetric dimethylarginine; alternate modification. R208 carries the post-translational modification Omega-N-methylarginine; alternate. 3 positions are modified to omega-N-methylarginine: R217, R237, and R247. Position 257 is an N6-acetyllysine (K257). The disordered stretch occupies residues 264–381 (KTWTTADFRT…QDKQKKRQRD (118 aa)). At T267 the chain carries Phosphothreonine. The short motif at 274-279 (KKKKRK) is the Nuclear localization signal element. The short motif at 280 to 296 (QGGSPDEPDSKATRTDC) is the Nuclear export signal (NES) element. S283 is modified (phosphoserine). Basic and acidic residues predominate over residues 287–296 (PDSKATRTDC). T292 is modified (phosphothreonine). Residue S297 is modified to Phosphoserine. Positions 298–314 (DNSDSDNDEGTEGEATE) are enriched in acidic residues. The segment covering 337 to 349 (EDGREEGKEDPEK) has biased composition (basic and acidic residues). Positions 362 to 364 (KRK) match the Nuclear localization signal motif. 2 C2H2 AKAP95-type zinc fingers span residues 391–413 (CSLC…SKFH) and 484–507 (CAAC…TMDH). The tract at residues 545–646 (GENPFTDSPE…DDEEGGGGAP (102 aa)) is disordered. A Phosphoserine modification is found at S552. Residues 552 to 563 (SPEEEKEQEEAE) show a composition bias toward acidic residues. Residues 564–586 (GGALDEGAQGEAAGISEGAEGVP) are compositionally biased toward low complexity. Pro residues predominate over residues 587 to 607 (AQPPVPPEPAPGAVSPPPPPP). The segment covering 634–646 (DVEDDEEGGGGAP) has biased composition (acidic residues).

The protein belongs to the AKAP95 family. As to quaternary structure, interacts (via N-terminus) with DHX9 (via RGG region). Interacts with TMPO isoform Beta, PRPF40A, RNF43, lamin-B. Interacts with HDAC3; increased during mitosis. Interacts with EBV EBNA-LP. Interacts with HIV-1 reverse transcriptase/ribonuclease H. Phosphorylated on serine or threonine residues possibly by PKA; probably modulating the interaction with TMPO isoform Beta. As to expression, ubiquitously expressed. Expressed in the brain cortex (at protein level).

The protein resides in the nucleus. The protein localises to the nucleus matrix. Its subcellular location is the nucleus speckle. It localises to the PML body. It is found in the cytoplasm. In terms of biological role, could play a role in constitutive transport element (CTE)-mediated gene expression by association with DHX9. Increases CTE-dependent nuclear unspliced mRNA export. Proposed to target PRKACA to the nucleus but does not seem to be implicated in the binding of regulatory subunit II of PKA. May be involved in nuclear envelope breakdown and chromatin condensation. May be involved in anchoring nuclear membranes to chromatin in interphase and in releasing membranes from chromating at mitosis. May regulate the initiation phase of DNA replication when associated with TMPO isoform Beta. Required for cell cycle G2/M transition and histone deacetylation during mitosis. In mitotic cells recruits HDAC3 to the vicinity of chromatin leading to deacetylation and subsequent phosphorylation at 'Ser-10' of histone H3; in this function seems to act redundantly with AKAP8. May be involved in regulation of pre-mRNA splicing. (Microbial infection) In case of EBV infection, may target PRKACA to EBNA-LP-containing nuclear sites to modulate transcription from specific promoters. Its function is as follows. (Microbial infection) Can synergize with DHX9 to activate the CTE-mediated gene expression of type D retroviruses. Functionally, (Microbial infection) In case of HIV-1 infection, involved in the DHX9-promoted annealing of host tRNA(Lys3) to viral genomic RNA as a primer in reverse transcription; in vitro negatively regulates DHX9 annealing activity. The polypeptide is A-kinase anchor protein 8-like (AKAP8L) (Homo sapiens (Human)).